The chain runs to 90 residues: Molybdopterin synthase sulfur carrier subunit (90 aa).

G90 carries the post-translational modification 1-thioglycine; alternate. G90 carries the glycyl adenylate; alternate modification.

It belongs to the MoaD family. MOCS2A subfamily. As to quaternary structure, heterotetramer; composed of 2 small (Mocs2A) and 2 large (Mocs2B) subunits. In terms of processing, C-terminal thiocarboxylation occurs in 2 steps, it is first acyl-adenylated (-COAMP) via the hesA/moeB/thiF part of MOCS3, then thiocarboxylated (-COSH) via the rhodanese domain of MOCS3.

The protein resides in the cytoplasm. It functions in the pathway cofactor biosynthesis; molybdopterin biosynthesis. Its function is as follows. Acts as a sulfur carrier required for molybdopterin biosynthesis. Component of the molybdopterin synthase complex that catalyzes the conversion of precursor Z into molybdopterin by mediating the incorporation of 2 sulfur atoms into precursor Z to generate a dithiolene group. In the complex, serves as sulfur donor by being thiocarboxylated (-COSH) at its C-terminus by MOCS3. After interaction with Mocs2B, the sulfur is then transferred to precursor Z to form molybdopterin. Involved during biosynthesis of the molybdenum cofactor. In Drosophila melanogaster (Fruit fly), this protein is Molybdopterin synthase sulfur carrier subunit.